The following is a 107-amino-acid chain: Period circadian protein (107 aa).

The disordered stretch occupies residues 81-107; it reads ITNGSNTGTGTSSGSFQPPLLTEALLN. Residues 82 to 95 are compositionally biased toward low complexity; sequence TNGSNTGTGTSSGS.

As to quaternary structure, forms a heterodimer with timeless (TIM); the complex then translocates into the nucleus. Phosphorylated with a circadian rhythmicity, probably by the double-time protein (dbt). Phosphorylation could be implicated in the stability of per monomer and in the formation of heterodimer per-tim.

Its subcellular location is the nucleus. It localises to the cytoplasm. The protein resides in the perinuclear region. In terms of biological role, essential for biological clock functions. Determines the period length of circadian and ultradian rhythms; an increase in PER dosage leads to shortened circadian rhythms and a decrease leads to lengthened circadian rhythms. Essential for the circadian rhythmicity of locomotor activity, eclosion behavior, and for the rhythmic component of the male courtship song that originates in the thoracic nervous system. The biological cycle depends on the rhythmic formation and nuclear localization of the TIM-PER complex. Light induces the degradation of TIM, which promotes elimination of PER. Nuclear activity of the heterodimer coordinatively regulates PER and TIM transcription through a negative feedback loop. Behaves as a negative element in circadian transcriptional loop. Does not appear to bind DNA, suggesting indirect transcriptional inhibition. The sequence is that of Period circadian protein (per) from Beris vallata (Common orange legionnaire).